Here is an 885-residue protein sequence, read N- to C-terminus: Putative membrane protein YdgH (885 aa).

The next 7 membrane-spanning stretches (helical) occupy residues 9-29, 181-201, 202-222, 227-247, 278-298, 304-324, and 354-374; these read WAIAAIVLALTVVLSLFSPNL, IIGLLLIVFRSVVTPFIPIVV, VGFSYLISQSILGILVYNVDF, FTQTFLVAILFGIGTDYCILL, ISGFAVLIGFSALGFAKFAIF, VAVGVGILMIILYTLLPLFMV, and VARPFLFIVITVVITLPFILT. Positions 498-518 are disordered; it reads MAGQTGSASNGGSGGSLGDAA. A run of 5 helical transmembrane segments spans residues 716 to 736, 740 to 760, 772 to 792, 817 to 837, and 847 to 867; these read MVIMIIGLFIVLTILFRSMIM, MIASLLLTYYTSISITELIFV, VPFFSFVILIALGVDYSIFLL, VIITAAIILAGTFAAMMPSGV, and IIIGLLLYGLVILPLFIPAII.

It belongs to the resistance-nodulation-cell division (RND) (TC 2.A.6) family. MmpL subfamily.

It is found in the cell membrane. This chain is Putative membrane protein YdgH (ydgH), found in Bacillus subtilis (strain 168).